A 283-amino-acid chain; its full sequence is DNA repair protein RecO (283 aa).

It belongs to the RecO family.

Functionally, involved in DNA repair and RecF pathway recombination. This chain is DNA repair protein RecO, found in Gloeothece citriformis (strain PCC 7424) (Cyanothece sp. (strain PCC 7424)).